The sequence spans 513 residues: ATP synthase subunit alpha (513 aa).

169 to 176 (GDRQTGKT) provides a ligand contact to ATP.

The protein belongs to the ATPase alpha/beta chains family. In terms of assembly, F-type ATPases have 2 components, CF(1) - the catalytic core - and CF(0) - the membrane proton channel. CF(1) has five subunits: alpha(3), beta(3), gamma(1), delta(1), epsilon(1). CF(0) has three main subunits: a(1), b(2) and c(9-12). The alpha and beta chains form an alternating ring which encloses part of the gamma chain. CF(1) is attached to CF(0) by a central stalk formed by the gamma and epsilon chains, while a peripheral stalk is formed by the delta and b chains.

It localises to the cell inner membrane. It catalyses the reaction ATP + H2O + 4 H(+)(in) = ADP + phosphate + 5 H(+)(out). Its function is as follows. Produces ATP from ADP in the presence of a proton gradient across the membrane. The alpha chain is a regulatory subunit. The chain is ATP synthase subunit alpha from Bordetella petrii (strain ATCC BAA-461 / DSM 12804 / CCUG 43448).